Consider the following 311-residue polypeptide: Thioredoxin reductase (311 aa).

An FAD-binding site is contributed by 35 to 42 (ERGIPGGQ). The cysteines at positions 134 and 137 are disulfide-linked. An FAD-binding site is contributed by 277 to 286 (DVRDKGLRQI).

The protein belongs to the class-II pyridine nucleotide-disulfide oxidoreductase family. In terms of assembly, homodimer. The cofactor is FAD.

Its subcellular location is the cytoplasm. It catalyses the reaction [thioredoxin]-dithiol + NADP(+) = [thioredoxin]-disulfide + NADPH + H(+). In Staphylococcus aureus (strain COL), this protein is Thioredoxin reductase (trxB).